A 194-amino-acid chain; its full sequence is Molybdenum cofactor guanylyltransferase (194 aa).

GTP is bound by residues 12 to 14, Lys25, Asn53, Asp70, and Asp100; that span reads LAG. Asp100 is a Mg(2+) binding site.

Belongs to the MobA family. As to quaternary structure, monomer. Mg(2+) is required as a cofactor.

It localises to the cytoplasm. It carries out the reaction Mo-molybdopterin + GTP + H(+) = Mo-molybdopterin guanine dinucleotide + diphosphate. Its function is as follows. Transfers a GMP moiety from GTP to Mo-molybdopterin (Mo-MPT) cofactor (Moco or molybdenum cofactor) to form Mo-molybdopterin guanine dinucleotide (Mo-MGD) cofactor. This is Molybdenum cofactor guanylyltransferase from Aliivibrio fischeri (strain ATCC 700601 / ES114) (Vibrio fischeri).